The chain runs to 270 residues: Urease accessory protein UreD (270 aa).

This sequence belongs to the UreD family. In terms of assembly, ureD, UreF and UreG form a complex that acts as a GTP-hydrolysis-dependent molecular chaperone, activating the urease apoprotein by helping to assemble the nickel containing metallocenter of UreC. The UreE protein probably delivers the nickel.

It localises to the cytoplasm. Functionally, required for maturation of urease via the functional incorporation of the urease nickel metallocenter. In Actinobacillus pleuropneumoniae serotype 5b (strain L20), this protein is Urease accessory protein UreD.